The following is a 250-amino-acid chain: 2,5-dichloro-2,5-cyclohexadiene-1,4-diol dehydrogenase (250 aa).

An NAD(+)-binding site is contributed by 9-34; sequence IIVTGGGSGIGRATVELLVASGANVA. Position 141 (Ser141) interacts with substrate. Tyr154 functions as the Proton acceptor in the catalytic mechanism.

Belongs to the short-chain dehydrogenases/reductases (SDR) family.

The enzyme catalyses 2,5-dichlorocyclohexa-2,5-dien-1,4-diol + NAD(+) = 2,5-dichlorohydroquinone + NADH + H(+). Its pathway is xenobiotic degradation; gamma-hexachlorocyclohexane degradation. Its function is as follows. Catalyzes the dehydrogenation of 2,5-dichloro-2,5-cyclohexadiene-1,4-diol (2,5-DDOL) to 2,5-dichlorohydroquinone (2,5-DCHQ), a step in the degradation of gamma-hexachlorocyclohexane (gamma-HCH or lindane). Has an essential role in this assimilation pathway that allows S.japonicum UT26 to grow on gamma-HCH as the sole source of carbon and energy. This is 2,5-dichloro-2,5-cyclohexadiene-1,4-diol dehydrogenase from Sphingobium indicum (strain DSM 16413 / CCM 7287 / MTCC 6362 / UT26 / NBRC 101211 / UT26S) (Sphingobium japonicum).